Reading from the N-terminus, the 320-residue chain is Fructose-1,6-bisphosphatase class 1 (320 aa).

Positions 93, 114, 116, and 117 each coordinate Mg(2+). Substrate-binding positions include 117–120, Tyr225, and Lys256; that span reads DGSS. Residue Glu262 participates in Mg(2+) binding.

This sequence belongs to the FBPase class 1 family. In terms of assembly, homotetramer. Requires Mg(2+) as cofactor.

It localises to the cytoplasm. The catalysed reaction is beta-D-fructose 1,6-bisphosphate + H2O = beta-D-fructose 6-phosphate + phosphate. It participates in carbohydrate biosynthesis; gluconeogenesis. The protein is Fructose-1,6-bisphosphatase class 1 of Syntrophotalea carbinolica (strain DSM 2380 / NBRC 103641 / GraBd1) (Pelobacter carbinolicus).